The following is a 260-amino-acid chain: Acetylglutamate kinase (260 aa).

Residues 45 to 46 (GG), Arg-67, and Asn-159 each bind substrate.

This sequence belongs to the acetylglutamate kinase family. ArgB subfamily.

The protein resides in the cytoplasm. It catalyses the reaction N-acetyl-L-glutamate + ATP = N-acetyl-L-glutamyl 5-phosphate + ADP. It functions in the pathway amino-acid biosynthesis; L-arginine biosynthesis; N(2)-acetyl-L-ornithine from L-glutamate: step 2/4. Functionally, catalyzes the ATP-dependent phosphorylation of N-acetyl-L-glutamate. The chain is Acetylglutamate kinase from Aliivibrio fischeri (strain ATCC 700601 / ES114) (Vibrio fischeri).